Reading from the N-terminus, the 598-residue chain is NADH-quinone oxidoreductase subunit C/D (598 aa).

The segment at 1–189 (MTDQIAQNSA…DPYVLTKQKE (189 aa)) is NADH dehydrogenase I subunit C. The NADH dehydrogenase I subunit D stretch occupies residues 213 to 598 (DFMFLNLGPN…IDFVMSDVDR (386 aa)).

This sequence in the N-terminal section; belongs to the complex I 30 kDa subunit family. In the C-terminal section; belongs to the complex I 49 kDa subunit family. NDH-1 is composed of 13 different subunits. Subunits NuoB, CD, E, F, and G constitute the peripheral sector of the complex.

The protein resides in the cell inner membrane. It catalyses the reaction a quinone + NADH + 5 H(+)(in) = a quinol + NAD(+) + 4 H(+)(out). NDH-1 shuttles electrons from NADH, via FMN and iron-sulfur (Fe-S) centers, to quinones in the respiratory chain. The immediate electron acceptor for the enzyme in this species is believed to be ubiquinone. Couples the redox reaction to proton translocation (for every two electrons transferred, four hydrogen ions are translocated across the cytoplasmic membrane), and thus conserves the redox energy in a proton gradient. The chain is NADH-quinone oxidoreductase subunit C/D from Proteus mirabilis (strain HI4320).